Reading from the N-terminus, the 279-residue chain is Lacto-N-neotetraose biosynthesis glycosyltransferase LgtB (279 aa).

Belongs to the glycosyltransferase 25 family.

The protein operates within glycan metabolism; lacto-N-neotetraose biosynthesis. It participates in bacterial outer membrane biogenesis; lipooligosaccharide biosynthesis. In terms of biological role, adds the second galactose to the lacto-N-tetraose chain in lipooligosaccharide (LOS). The protein is Lacto-N-neotetraose biosynthesis glycosyltransferase LgtB (lgtB) of Neisseria meningitidis serogroup A / serotype 4A (strain DSM 15465 / Z2491).